Consider the following 151-residue polypeptide: Ribosome maturation factor RimP (151 aa).

Belongs to the RimP family.

It localises to the cytoplasm. In terms of biological role, required for maturation of 30S ribosomal subunits. This Vibrio campbellii (strain ATCC BAA-1116) protein is Ribosome maturation factor RimP.